Consider the following 371-residue polypeptide: Peptidyl-prolyl cis-trans isomerase CPR6 (371 aa).

Residues 7–174 (FFDISIGGKP…RDVKIDDCGV (168 aa)) enclose the PPIase cyclophilin-type domain. 3 TPR repeats span residues 219–252 (IETVKNIGTEQFKKQNYSVALEKYVKCDKFLKEY), 270–303 (VSIPLNIAICALKLKDYKQVLVASSEVLYAEAAD), and 308–341 (AKALYRRGLAYYHVNDTDMALNDLEMATTFQPND).

This sequence belongs to the cyclophilin-type PPIase family. PPIase D subfamily. In terms of assembly, interacts with RPD3.

It is found in the cytoplasm. It catalyses the reaction [protein]-peptidylproline (omega=180) = [protein]-peptidylproline (omega=0). Its function is as follows. PPIases accelerate the folding of proteins. It catalyzes the cis-trans isomerization of proline imidic peptide bonds in oligopeptides. This is Peptidyl-prolyl cis-trans isomerase CPR6 (CPR6) from Saccharomyces cerevisiae (strain ATCC 204508 / S288c) (Baker's yeast).